The chain runs to 358 residues: Alanine racemase (358 aa).

K35 functions as the Proton acceptor; specific for D-alanine in the catalytic mechanism. K35 carries the post-translational modification N6-(pyridoxal phosphate)lysine. Residue R130 participates in substrate binding. Y255 serves as the catalytic Proton acceptor; specific for L-alanine. A substrate-binding site is contributed by M303.

It belongs to the alanine racemase family. Pyridoxal 5'-phosphate serves as cofactor.

The catalysed reaction is L-alanine = D-alanine. Its pathway is amino-acid biosynthesis; D-alanine biosynthesis; D-alanine from L-alanine: step 1/1. Catalyzes the interconversion of L-alanine and D-alanine. May also act on other amino acids. This Shewanella baltica (strain OS155 / ATCC BAA-1091) protein is Alanine racemase (alr).